Reading from the N-terminus, the 410-residue chain is Serine hydroxymethyltransferase (410 aa).

Residues L119 and 123–125 contribute to the (6S)-5,6,7,8-tetrahydrofolate site; that span reads GHL. K228 is subject to N6-(pyridoxal phosphate)lysine. Residue 351-353 coordinates (6S)-5,6,7,8-tetrahydrofolate; that stretch reads SPF.

This sequence belongs to the SHMT family. As to quaternary structure, homodimer. Pyridoxal 5'-phosphate is required as a cofactor.

The protein localises to the cytoplasm. The enzyme catalyses (6R)-5,10-methylene-5,6,7,8-tetrahydrofolate + glycine + H2O = (6S)-5,6,7,8-tetrahydrofolate + L-serine. It participates in one-carbon metabolism; tetrahydrofolate interconversion. Its pathway is amino-acid biosynthesis; glycine biosynthesis; glycine from L-serine: step 1/1. In terms of biological role, catalyzes the reversible interconversion of serine and glycine with tetrahydrofolate (THF) serving as the one-carbon carrier. This reaction serves as the major source of one-carbon groups required for the biosynthesis of purines, thymidylate, methionine, and other important biomolecules. Also exhibits THF-independent aldolase activity toward beta-hydroxyamino acids, producing glycine and aldehydes, via a retro-aldol mechanism. The protein is Serine hydroxymethyltransferase of Clostridium perfringens (strain 13 / Type A).